Here is a 77-residue protein sequence, read N- to C-terminus: UPF0346 protein LMOf2365_1885 (77 aa).

Belongs to the UPF0346 family.

The chain is UPF0346 protein LMOf2365_1885 from Listeria monocytogenes serotype 4b (strain F2365).